The chain runs to 93 residues: Small ribosomal subunit protein uS17 (93 aa).

The protein belongs to the universal ribosomal protein uS17 family. As to quaternary structure, part of the 30S ribosomal subunit.

In terms of biological role, one of the primary rRNA binding proteins, it binds specifically to the 5'-end of 16S ribosomal RNA. The chain is Small ribosomal subunit protein uS17 from Corynebacterium kroppenstedtii (strain DSM 44385 / JCM 11950 / CIP 105744 / CCUG 35717).